Reading from the N-terminus, the 302-residue chain is Oligopeptide transport system permease protein OppC (302 aa).

The Cytoplasmic portion of the chain corresponds to 1-39 (MMLSKKNSETLENFSEKLEVEGRSLWQDARRRFMHNRAA). A helical transmembrane segment spans residues 40 to 62 (VASLIVLFLIALFVTVAPMLSQF). Over 63-102 (TYFDTDWGMMSSAPDMASGHYFGTDSSGRDLLVRVAIGGR) the chain is Periplasmic. The region spanning 101 to 290 (GRISLMVGIA…VTLFCFNFIG (190 aa)) is the ABC transmembrane type-1 domain. A helical membrane pass occupies residues 103-125 (ISLMVGIAAALVAVIVGTLYGSL). Topologically, residues 126–137 (SGYLGGKIDSVM) are cytoplasmic. A helical transmembrane segment spans residues 138–160 (MRLLEILNSFPFMFFVILLVTFF). At 161–163 (GQN) the chain is on the periplasmic side. A helical membrane pass occupies residues 164–183 (ILLIFVAIGMVSWLDMARIV). Over 184–213 (RGQTLSLKRKEFIEAAQVGGVSTASIVIRH) the chain is Cytoplasmic. A helical membrane pass occupies residues 214–236 (IVPNVLGVVVVYASLLVPSMILF). Residues 237–267 (ESFLSFLGLGTQEPLSSWGALLSDGANSMEV) lie on the Periplasmic side of the membrane. The chain crosses the membrane as a helical span at residues 268 to 290 (SPWLLLFPAGFLVVTLFCFNFIG). The Cytoplasmic segment spans residues 291-302 (DGLRDALDPKDR).

Belongs to the binding-protein-dependent transport system permease family. OppBC subfamily. In terms of assembly, the complex is composed of two ATP-binding proteins (OppD and OppF), two transmembrane proteins (OppB and OppC) and a solute-binding protein (OppA).

It is found in the cell inner membrane. Its function is as follows. Part of the ABC transporter complex OppABCDF involved in the uptake of oligopeptides, including the cell wall murein tripeptide L-alanyl-gamma-D-glutamyl-meso-diaminopimelate. Responsible for the translocation of the substrate across the membrane. Plays an important nutritional role and is involved in the recycling of cell wall peptides. The polypeptide is Oligopeptide transport system permease protein OppC (Salmonella typhimurium (strain LT2 / SGSC1412 / ATCC 700720)).